A 173-amino-acid chain; its full sequence is Insertion element IS1397 uncharacterized 20.1 kDa protein (173 aa).

Residues 115–135 (KSMTRSDDTHENEANMTPEEM) are disordered.

This sequence belongs to the IS150/IS1296 orfA family.

This is Insertion element IS1397 uncharacterized 20.1 kDa protein from Escherichia coli.